Consider the following 127-residue polypeptide: Fluoride-specific ion channel FluC 1 (127 aa).

4 helical membrane passes run 4 to 24 (TLLAVFIGGGVGSMARWLVSL), 35 to 55 (VGTLIVNLVGAFIIGLTLAFF), 71 to 91 (TGFCGGLTTFSTFSVEVVYLI), and 101 to 121 (GTILLNVAGSLAMTMLAFILV). The Na(+) site is built by glycine 75 and threonine 78.

Belongs to the fluoride channel Fluc/FEX (TC 1.A.43) family.

It localises to the cell inner membrane. The enzyme catalyses fluoride(in) = fluoride(out). Its activity is regulated as follows. Na(+) is not transported, but it plays an essential structural role and its presence is essential for fluoride channel function. Fluoride-specific ion channel. Important for reducing fluoride concentration in the cell, thus reducing its toxicity. The protein is Fluoride-specific ion channel FluC 1 of Yersinia pestis.